Consider the following 190-residue polypeptide: Glutathione peroxidase 2 (190 aa).

U40 is a catalytic residue. A non-standard amino acid (selenocysteine) is located at residue U40.

It belongs to the glutathione peroxidase family. Homotetramer.

It localises to the cytoplasm. The protein resides in the cytosol. The enzyme catalyses 2 glutathione + H2O2 = glutathione disulfide + 2 H2O. The catalysed reaction is a hydroperoxy polyunsaturated fatty acid + 2 glutathione = a hydroxy polyunsaturated fatty acid + glutathione disulfide + H2O. It carries out the reaction tert-butyl hydroperoxide + 2 glutathione = tert-butanol + glutathione disulfide + H2O. It catalyses the reaction cumene hydroperoxide + 2 glutathione = 2-phenylpropan-2-ol + glutathione disulfide + H2O. The enzyme catalyses (13S)-hydroperoxy-(9Z,11E)-octadecadienoate + 2 glutathione = (13S)-hydroxy-(9Z,11E)-octadecadienoate + glutathione disulfide + H2O. The catalysed reaction is (5S)-hydroperoxy-(6E,8Z,11Z,14Z)-eicosatetraenoate + 2 glutathione = (5S)-hydroxy-(6E,8Z,11Z,14Z)-eicosatetraenoate + glutathione disulfide + H2O. It carries out the reaction (12R)-hydroperoxy-(5Z,8Z,10E,14Z)-eicosatetraenoate + 2 glutathione = (12R)-hydroxy-(5Z,8Z,10E,14Z)-eicosatetraenoate + glutathione disulfide + H2O. It catalyses the reaction (15S)-hydroperoxy-(5Z,8Z,11Z,13E)-eicosatetraenoate + 2 glutathione = (15S)-hydroxy-(5Z,8Z,11Z,13E)-eicosatetraenoate + glutathione disulfide + H2O. Catalyzes the reduction of hydroperoxides in a glutathione-dependent manner thus regulating cellular redox homeostasis. Can reduce small soluble hydroperoxides such as H2O2, cumene hydroperoxide and tert-butyl hydroperoxide, as well as several fatty acid-derived hydroperoxides. Cannot reduce phosphatidycholine hydroperoxide. This chain is Glutathione peroxidase 2 (GPX2), found in Callithrix jacchus (White-tufted-ear marmoset).